The sequence spans 206 residues: Small ribosomal subunit protein uS4 (206 aa).

Positions Ala23–Asp47 are disordered. An S4 RNA-binding domain is found at Arg94–Val157.

This sequence belongs to the universal ribosomal protein uS4 family. Part of the 30S ribosomal subunit. Contacts protein S5. The interaction surface between S4 and S5 is involved in control of translational fidelity.

One of the primary rRNA binding proteins, it binds directly to 16S rRNA where it nucleates assembly of the body of the 30S subunit. In terms of biological role, with S5 and S12 plays an important role in translational accuracy. The protein is Small ribosomal subunit protein uS4 of Paracoccus denitrificans (strain Pd 1222).